We begin with the raw amino-acid sequence, 206 residues long: MSYVRSKICGITRIEDALAAAEAGADAIGFVFYAKSPRAVDVRQARAIITELPPFVTTVGLFVNASRCELNEILEVVPLDLLQFHGDETPQDCEGYHRPWIKALRVRPGDDLEAACKQYAGARGILLDTYVAGVPGGTGEAFDWSLVPAHLSKPIILAGGLSADNVGQAIAQVRPYAVDVSGGVEQAKGIKDAAKIEAFMRAVKQA.

The protein belongs to the TrpF family.

It carries out the reaction N-(5-phospho-beta-D-ribosyl)anthranilate = 1-(2-carboxyphenylamino)-1-deoxy-D-ribulose 5-phosphate. It functions in the pathway amino-acid biosynthesis; L-tryptophan biosynthesis; L-tryptophan from chorismate: step 3/5. The chain is N-(5'-phosphoribosyl)anthranilate isomerase from Pseudomonas putida (strain GB-1).